The primary structure comprises 299 residues: ATP phosphoribosyltransferase (299 aa).

The protein belongs to the ATP phosphoribosyltransferase family. Long subfamily. Requires Mg(2+) as cofactor.

It is found in the cytoplasm. The catalysed reaction is 1-(5-phospho-beta-D-ribosyl)-ATP + diphosphate = 5-phospho-alpha-D-ribose 1-diphosphate + ATP. It functions in the pathway amino-acid biosynthesis; L-histidine biosynthesis; L-histidine from 5-phospho-alpha-D-ribose 1-diphosphate: step 1/9. Feedback inhibited by histidine. In terms of biological role, catalyzes the condensation of ATP and 5-phosphoribose 1-diphosphate to form N'-(5'-phosphoribosyl)-ATP (PR-ATP). Has a crucial role in the pathway because the rate of histidine biosynthesis seems to be controlled primarily by regulation of HisG enzymatic activity. In Shewanella sediminis (strain HAW-EB3), this protein is ATP phosphoribosyltransferase.